Here is a 536-residue protein sequence, read N- to C-terminus: Sensory rhodopsin I transducer (536 aa).

At 2–14 (TIAWARRRYGVKL) the chain is on the cytoplasmic side. A helical membrane pass occupies residues 15–29 (GLGYIATAGLLVGVG). Residues 30–39 (VTTNDVPSTI) lie on the Extracellular side of the membrane. Residues 40-55 (VAGIAGLLTLGSINAA) form a helical membrane-spanning segment. An HAMP 1 domain is found at 55–107 (AETVASIKEIAAQTERVANGNLEQEVTSTRTDEFGSLADSIEQMRQSLRGRLN). The Cytoplasmic portion of the chain corresponds to 56 to 536 (ETVASIKEIA…MRAGADGGGA (481 aa)). Residues 116–145 (LEETQAEAETAREEAEQAKQEAQAAEREAR) are disordered. Over residues 124 to 145 (ETAREEAEQAKQEAQAAEREAR) the composition is skewed to basic and acidic residues. In terms of domain architecture, HAMP 2 spans 149–202 (ATYQDTAKRYGETMEAAATGDLTQRVDVDTDHEAMETVGTAFNQMMDDLQATVR). Positions 221 to 459 (TSADIEASAG…STATSVERVA (239 aa)) constitute a Methyl-accepting transducer domain. Glu266 carries the post-translational modification Glutamate methyl ester (Glu). The interval 278 to 307 (SEDVATASDAARDSSKSALDEMSSIETEVD) is disordered. Basic and acidic residues predominate over residues 287–296 (AARDSSKSAL). The residue at position 473 (Glu473) is a Glutamate methyl ester (Glu). The tract at residues 512-536 (TEDSETAGGSVEQPVMRAGADGGGA) is disordered.

Belongs to the methyl-accepting chemotaxis (MCP) protein family. Methylated by CheR.

Its subcellular location is the cell membrane. In terms of biological role, transduces signals from the phototaxis receptor sensory rhodopsin I (SR-I) to the flagellar motor. Responds to light changes through the variation of the level of methylation. The protein is Sensory rhodopsin I transducer (htr1) of Halobacterium salinarum (strain ATCC 29341 / DSM 671 / R1).